The primary structure comprises 396 residues: Ribosomal RNA large subunit methyltransferase I (396 aa).

The PUA domain occupies 2 to 81; that stretch reads SVRLVLAKGR…ESIDIAFFSR (80 aa).

Belongs to the methyltransferase superfamily. RlmI family.

The protein localises to the cytoplasm. The enzyme catalyses cytidine(1962) in 23S rRNA + S-adenosyl-L-methionine = 5-methylcytidine(1962) in 23S rRNA + S-adenosyl-L-homocysteine + H(+). Functionally, specifically methylates the cytosine at position 1962 (m5C1962) of 23S rRNA. The polypeptide is Ribosomal RNA large subunit methyltransferase I (Escherichia coli O157:H7).